Consider the following 281-residue polypeptide: 2,3,4,5-tetrahydropyridine-2,6-dicarboxylate N-succinyltransferase (281 aa).

The protein belongs to the transferase hexapeptide repeat family.

It localises to the cytoplasm. It carries out the reaction (S)-2,3,4,5-tetrahydrodipicolinate + succinyl-CoA + H2O = (S)-2-succinylamino-6-oxoheptanedioate + CoA. It functions in the pathway amino-acid biosynthesis; L-lysine biosynthesis via DAP pathway; LL-2,6-diaminopimelate from (S)-tetrahydrodipicolinate (succinylase route): step 1/3. The polypeptide is 2,3,4,5-tetrahydropyridine-2,6-dicarboxylate N-succinyltransferase (Afipia carboxidovorans (strain ATCC 49405 / DSM 1227 / KCTC 32145 / OM5) (Oligotropha carboxidovorans)).